Consider the following 142-residue polypeptide: Alpha-lactalbumin (142 aa).

The first 19 residues, 1–19, serve as a signal peptide directing secretion; the sequence is MRFFVPLFLVGILFPAILA. The 123-residue stretch at 20–142 folds into the C-type lysozyme domain; the sequence is KQFTKCELSQ…KLEQWLCEKL (123 aa). Intrachain disulfides connect cysteine 25–cysteine 139, cysteine 47–cysteine 130, cysteine 80–cysteine 96, and cysteine 92–cysteine 110. Threonine 57 and glutamine 58 together coordinate Ca(2+). Residue asparagine 64 is glycosylated (N-linked (GlcNAc...) asparagine). Position 68 (glutamate 68) interacts with Zn(2+). An N-linked (GlcNAc...) asparagine; atypical; partial glycan is attached at asparagine 90. Ca(2+) is bound by residues lysine 98, leucine 100, aspartate 101, aspartate 102, aspartate 103, aspartate 106, and aspartate 107. A Zn(2+)-binding site is contributed by glutamate 135.

It belongs to the glycosyl hydrolase 22 family. As to quaternary structure, lactose synthase (LS) is a heterodimer of a catalytic component, beta1,4-galactosyltransferase (beta4Gal-T1) and a regulatory component, alpha-lactalbumin (LA). In terms of tissue distribution, mammary gland specific. Secreted in milk.

The protein resides in the secreted. In terms of biological role, regulatory subunit of lactose synthase, changes the substrate specificity of galactosyltransferase in the mammary gland making glucose a good acceptor substrate for this enzyme. This enables LS to synthesize lactose, the major carbohydrate component of milk. In other tissues, galactosyltransferase transfers galactose onto the N-acetylglucosamine of the oligosaccharide chains in glycoproteins. In Homo sapiens (Human), this protein is Alpha-lactalbumin (LALBA).